Consider the following 273-residue polypeptide: Nitrogenase iron protein (273 aa).

8–15 (GKGGIGKS) serves as a coordination point for ATP. Cys95 is a binding site for [4Fe-4S] cluster. Arg98 carries the ADP-ribosylarginine; by dinitrogenase reductase ADP-ribosyltransferase modification. A [4Fe-4S] cluster-binding site is contributed by Cys130.

It belongs to the NifH/BchL/ChlL family. Homodimer. The cofactor is [4Fe-4S] cluster. The reversible ADP-ribosylation of Arg-98 inactivates the nitrogenase reductase and regulates nitrogenase activity.

It catalyses the reaction N2 + 8 reduced [2Fe-2S]-[ferredoxin] + 16 ATP + 16 H2O = H2 + 8 oxidized [2Fe-2S]-[ferredoxin] + 2 NH4(+) + 16 ADP + 16 phosphate + 6 H(+). In terms of biological role, the key enzymatic reactions in nitrogen fixation are catalyzed by the nitrogenase complex, which has 2 components: the iron protein and the molybdenum-iron protein. In Roseiflexus sp. (strain RS-1), this protein is Nitrogenase iron protein.